The chain runs to 913 residues: Zinc finger protein 112 (913 aa).

In terms of domain architecture, KRAB spans 8-79 (VTFKDVAVVF…ETETPRDGCS (72 aa)). Residue K256 forms a Glycyl lysine isopeptide (Lys-Gly) (interchain with G-Cter in SUMO2) linkage. The C2H2-type 1; degenerate zinc-finger motif lies at 258-280 (YPCTGYRKAFSNDSSSEVHQQFH). A C2H2-type 2; degenerate zinc finger spans residues 443–465 (YNSEECGNGFSLASHFQDLQIVH). A C2H2-type 3; degenerate zinc finger spans residues 471-493 (YKRYVCSNSFSHNLYLQGHPKIH). The C2H2-type 4; degenerate zinc-finger motif lies at 497 to 519 (KPRKEHGNGFNWSSKLKDHQRVH). 13 consecutive C2H2-type zinc fingers follow at residues 525–547 (YKCN…QRVH), 553–575 (YKCE…QRVH), 581–603 (YKCE…QRVH), 609–631 (YKCE…QRVH), 637–659 (FKCE…QRVH), 665–687 (YKCE…QRVH), 693–715 (YQCD…QSVH), 721–743 (YICE…QRVH), 749–771 (YKCE…RRVH), 777–799 (YKCE…QRVH), 805–827 (YKCE…HRVH), 833–855 (YKCE…QRVH), and 861–883 (YKCD…QRVH). Residue K890 forms a Glycyl lysine isopeptide (Lys-Gly) (interchain with G-Cter in SUMO2) linkage.

It belongs to the krueppel C2H2-type zinc-finger protein family.

The protein localises to the nucleus. Its function is as follows. May be involved in transcriptional regulation. The chain is Zinc finger protein 112 (ZNF112) from Homo sapiens (Human).